The chain runs to 1040 residues: Beta-galactosidase (1040 aa).

Substrate is bound by residues N111 and D210. D210 lines the Na(+) pocket. Residues E427, H429, and E472 each coordinate Mg(2+). Substrate is bound by residues E472 and 548–551 (EYAH). E472 functions as the Proton donor in the catalytic mechanism. Residue E548 is the Nucleophile of the active site. Mg(2+) is bound at residue N608. Na(+) contacts are provided by F612 and D615. Substrate-binding residues include D615 and W1016.

The protein belongs to the glycosyl hydrolase 2 family. In terms of assembly, homotetramer. Mg(2+) is required as a cofactor. It depends on Na(+) as a cofactor.

The catalysed reaction is Hydrolysis of terminal non-reducing beta-D-galactose residues in beta-D-galactosides.. This is Beta-galactosidase from Pectobacterium atrosepticum (strain SCRI 1043 / ATCC BAA-672) (Erwinia carotovora subsp. atroseptica).